Reading from the N-terminus, the 331-residue chain is Pseudouridylate synthase TRUB2, mitochondrial (331 aa).

Asp-98 serves as the catalytic Nucleophile. The interval 309–331 (STGQPWGLKDPSSTLELESCSGQ) is disordered. Positions 319 to 331 (PSSTLELESCSGQ) are enriched in polar residues.

It belongs to the pseudouridine synthase TruB family. Forms a regulatory protein-RNA complex, consisting of RCC1L, NGRN, RPUSD3, RPUSD4, TRUB2, FASTKD2 and 16S mt-rRNA.

It localises to the mitochondrion matrix. The catalysed reaction is a uridine in mRNA = a pseudouridine in mRNA. The enzyme catalyses uridine(55) in tRNA = pseudouridine(55) in tRNA. In terms of biological role, minor enzyme contributing to the isomerization of uridine to pseudouridine (pseudouridylation) of specific mitochondrial mRNAs (mt-mRNAs) such as COXI and COXIII mt-mRNAs. As a component of a functional protein-RNA module, consisting of RCC1L, NGRN, RPUSD3, RPUSD4, TRUB2, FASTKD2 and 16S mitochondrial ribosomal RNA (16S mt-rRNA), controls 16S mt-rRNA abundance and is required for intra-mitochondrial translation. Also catalyzes pseudouridylation of some tRNAs, including synthesis of pseudouridine(55) from uracil-55, in the psi GC loop of a subset of tRNAs. In Mus musculus (Mouse), this protein is Pseudouridylate synthase TRUB2, mitochondrial.